A 130-amino-acid chain; its full sequence is Small ribosomal subunit protein uS8 (130 aa).

The protein belongs to the universal ribosomal protein uS8 family. In terms of assembly, part of the 30S ribosomal subunit.

In terms of biological role, one of the primary rRNA binding proteins, it binds directly to 16S rRNA central domain where it helps coordinate assembly of the platform of the 30S subunit. In Methanococcus maripaludis (strain C6 / ATCC BAA-1332), this protein is Small ribosomal subunit protein uS8.